An 89-amino-acid polypeptide reads, in one-letter code: Elongation factor 1-beta (89 aa).

The protein belongs to the EF-1-beta/EF-1-delta family.

Its function is as follows. Promotes the exchange of GDP for GTP in EF-1-alpha/GDP, thus allowing the regeneration of EF-1-alpha/GTP that could then be used to form the ternary complex EF-1-alpha/GTP/AAtRNA. This Methanosarcina acetivorans (strain ATCC 35395 / DSM 2834 / JCM 12185 / C2A) protein is Elongation factor 1-beta.